We begin with the raw amino-acid sequence, 300 residues long: tRNA pseudouridine synthase B (300 aa).

Residue Asp38 is the Nucleophile of the active site.

This sequence belongs to the pseudouridine synthase TruB family. Type 1 subfamily.

It catalyses the reaction uridine(55) in tRNA = pseudouridine(55) in tRNA. Its function is as follows. Responsible for synthesis of pseudouridine from uracil-55 in the psi GC loop of transfer RNAs. This is tRNA pseudouridine synthase B from Dehalococcoides mccartyi (strain CBDB1).